Consider the following 377-residue polypeptide: Nitric oxide reductase FlRd-NAD(+) reductase (377 aa).

Belongs to the FAD-dependent oxidoreductase family. Requires FAD as cofactor.

The protein localises to the cytoplasm. The enzyme catalyses 2 reduced [nitric oxide reductase rubredoxin domain] + NAD(+) + H(+) = 2 oxidized [nitric oxide reductase rubredoxin domain] + NADH. It participates in nitrogen metabolism; nitric oxide reduction. One of at least two accessory proteins for anaerobic nitric oxide (NO) reductase. Reduces the rubredoxin moiety of NO reductase. The polypeptide is Nitric oxide reductase FlRd-NAD(+) reductase (Escherichia coli O81 (strain ED1a)).